We begin with the raw amino-acid sequence, 572 residues long: Glutamate--tRNA ligase (572 aa).

The 'HIGH' region motif lies at 112–122 (PNPNGPPSLGN).

Belongs to the class-I aminoacyl-tRNA synthetase family. Glutamate--tRNA ligase type 2 subfamily.

The protein localises to the cytoplasm. It catalyses the reaction tRNA(Glu) + L-glutamate + ATP = L-glutamyl-tRNA(Glu) + AMP + diphosphate. Catalyzes the attachment of glutamate to tRNA(Glu) in a two-step reaction: glutamate is first activated by ATP to form Glu-AMP and then transferred to the acceptor end of tRNA(Glu). This is Glutamate--tRNA ligase from Methanocella arvoryzae (strain DSM 22066 / NBRC 105507 / MRE50).